A 400-amino-acid chain; its full sequence is Acetate kinase (400 aa).

Asparagine 10 contributes to the Mg(2+) binding site. ATP is bound at residue lysine 17. Arginine 91 is a binding site for substrate. The Proton donor/acceptor role is filled by aspartate 150. Residues 210-214, 285-287, and 333-337 each bind ATP; these read HLGNG, DCR, and GIGEN. Mg(2+) is bound at residue glutamate 387.

It belongs to the acetokinase family. Homodimer. Mg(2+) serves as cofactor. Requires Mn(2+) as cofactor.

The protein resides in the cytoplasm. The enzyme catalyses acetate + ATP = acetyl phosphate + ADP. Its pathway is metabolic intermediate biosynthesis; acetyl-CoA biosynthesis; acetyl-CoA from acetate: step 1/2. Catalyzes the formation of acetyl phosphate from acetate and ATP. Can also catalyze the reverse reaction. This chain is Acetate kinase, found in Cronobacter sakazakii (strain ATCC BAA-894) (Enterobacter sakazakii).